The sequence spans 456 residues: Cysteine--tRNA ligase (456 aa).

Cys30 is a Zn(2+) binding site. The short motif at 32–42 is the 'HIGH' region element; sequence MTVYDFCHIGH. Residues Cys211, His236, and Glu240 each contribute to the Zn(2+) site. The 'KMSKS' region signature appears at 268 to 272; it reads KMSKS. Lys271 contacts ATP.

Belongs to the class-I aminoacyl-tRNA synthetase family. As to quaternary structure, monomer. The cofactor is Zn(2+).

The protein resides in the cytoplasm. The enzyme catalyses tRNA(Cys) + L-cysteine + ATP = L-cysteinyl-tRNA(Cys) + AMP + diphosphate. This is Cysteine--tRNA ligase from Dichelobacter nodosus (strain VCS1703A).